The primary structure comprises 330 residues: Phospho-N-acetylmuramoyl-pentapeptide-transferase (330 aa).

10 helical membrane passes run 3–23 (SVVL…SSFI), 49–69 (TPTM…AVVA), 71–91 (PNPA…VGLY), 111–131 (FLLL…YVGV), 145–165 (VLGP…FVIV), 179–199 (GLAA…AFLE), 204–224 (LAII…YNSH), 228–248 (IFMG…AAIL), 256–276 (PVIG…VVVF), and 307–327 (FWIV…FFLY).

It belongs to the glycosyltransferase 4 family. MraY subfamily. Mg(2+) serves as cofactor.

Its subcellular location is the cell membrane. The catalysed reaction is UDP-N-acetyl-alpha-D-muramoyl-L-alanyl-gamma-D-glutamyl-meso-2,6-diaminopimeloyl-D-alanyl-D-alanine + di-trans,octa-cis-undecaprenyl phosphate = di-trans,octa-cis-undecaprenyl diphospho-N-acetyl-alpha-D-muramoyl-L-alanyl-D-glutamyl-meso-2,6-diaminopimeloyl-D-alanyl-D-alanine + UMP. It functions in the pathway cell wall biogenesis; peptidoglycan biosynthesis. Its function is as follows. Catalyzes the initial step of the lipid cycle reactions in the biosynthesis of the cell wall peptidoglycan: transfers peptidoglycan precursor phospho-MurNAc-pentapeptide from UDP-MurNAc-pentapeptide onto the lipid carrier undecaprenyl phosphate, yielding undecaprenyl-pyrophosphoryl-MurNAc-pentapeptide, known as lipid I. The polypeptide is Phospho-N-acetylmuramoyl-pentapeptide-transferase (Rubrobacter xylanophilus (strain DSM 9941 / JCM 11954 / NBRC 16129 / PRD-1)).